The sequence spans 199 residues: Superoxide dismutase [Fe] (199 aa).

Fe cation contacts are provided by His-27, His-74, Asp-158, and His-162.

The protein belongs to the iron/manganese superoxide dismutase family. Homodimer. Fe cation serves as cofactor.

It catalyses the reaction 2 superoxide + 2 H(+) = H2O2 + O2. Its function is as follows. Destroys superoxide anion radicals which are normally produced within the cells and which are toxic to biological systems. This Babesia bovis protein is Superoxide dismutase [Fe] (SODB).